Reading from the N-terminus, the 751-residue chain is Protein WEAK CHLOROPLAST MOVEMENT UNDER BLUE LIGHT-like 3 (751 aa).

A Phosphoserine modification is found at S113. Coiled-coil stretches lie at residues 165–558 and 588–647; these read ERRK…ALQE and QALE…KARD. 2 stretches are compositionally biased toward basic and acidic residues: residues 455-467 and 625-689; these read RERQDLEETKQKE and NREM…RNKE. 2 disordered regions span residues 455 to 479 and 625 to 751; these read RERQDLEETKQKESTGLARTNDKDA and NREM…HSHK. Residues 704–723 are compositionally biased toward low complexity; sequence GSSSNNTGGSTTTNNNNLTP.

The protein belongs to the WEB family.

This is Protein WEAK CHLOROPLAST MOVEMENT UNDER BLUE LIGHT-like 3 (WEL3) from Arabidopsis thaliana (Mouse-ear cress).